Here is a 185-residue protein sequence, read N- to C-terminus: Ribosome-recycling factor (185 aa).

It belongs to the RRF family.

Its subcellular location is the cytoplasm. In terms of biological role, responsible for the release of ribosomes from messenger RNA at the termination of protein biosynthesis. May increase the efficiency of translation by recycling ribosomes from one round of translation to another. The chain is Ribosome-recycling factor from Rhodospirillum centenum (strain ATCC 51521 / SW).